The primary structure comprises 333 residues: Holliday junction branch migration complex subunit RuvB (333 aa).

A large ATPase domain (RuvB-L) region spans residues 1–173 (MTAPENLDAA…FGIIEHLEYY (173 aa)). Residues Leu11, Arg12, Gly53, Lys56, Thr57, Thr58, 120-122 (EDF), Arg163, Tyr173, and Arg210 contribute to the ATP site. Thr57 is a binding site for Mg(2+). The tract at residues 174–244 (TAEEIATNLL…RAQSALDKLG (71 aa)) is small ATPAse domain (RuvB-S). Positions 247-333 (SAGLDDRDKK…IDDGNGIFLN (87 aa)) are head domain (RuvB-H). The DNA site is built by Arg302 and Arg307.

It belongs to the RuvB family. Homohexamer. Forms an RuvA(8)-RuvB(12)-Holliday junction (HJ) complex. HJ DNA is sandwiched between 2 RuvA tetramers; dsDNA enters through RuvA and exits via RuvB. An RuvB hexamer assembles on each DNA strand where it exits the tetramer. Each RuvB hexamer is contacted by two RuvA subunits (via domain III) on 2 adjacent RuvB subunits; this complex drives branch migration. In the full resolvosome a probable DNA-RuvA(4)-RuvB(12)-RuvC(2) complex forms which resolves the HJ.

Its subcellular location is the cytoplasm. It catalyses the reaction ATP + H2O = ADP + phosphate + H(+). In terms of biological role, the RuvA-RuvB-RuvC complex processes Holliday junction (HJ) DNA during genetic recombination and DNA repair, while the RuvA-RuvB complex plays an important role in the rescue of blocked DNA replication forks via replication fork reversal (RFR). RuvA specifically binds to HJ cruciform DNA, conferring on it an open structure. The RuvB hexamer acts as an ATP-dependent pump, pulling dsDNA into and through the RuvAB complex. RuvB forms 2 homohexamers on either side of HJ DNA bound by 1 or 2 RuvA tetramers; 4 subunits per hexamer contact DNA at a time. Coordinated motions by a converter formed by DNA-disengaged RuvB subunits stimulates ATP hydrolysis and nucleotide exchange. Immobilization of the converter enables RuvB to convert the ATP-contained energy into a lever motion, pulling 2 nucleotides of DNA out of the RuvA tetramer per ATP hydrolyzed, thus driving DNA branch migration. The RuvB motors rotate together with the DNA substrate, which together with the progressing nucleotide cycle form the mechanistic basis for DNA recombination by continuous HJ branch migration. Branch migration allows RuvC to scan DNA until it finds its consensus sequence, where it cleaves and resolves cruciform DNA. The chain is Holliday junction branch migration complex subunit RuvB from Deinococcus radiodurans (strain ATCC 13939 / DSM 20539 / JCM 16871 / CCUG 27074 / LMG 4051 / NBRC 15346 / NCIMB 9279 / VKM B-1422 / R1).